The chain runs to 92 residues: Antifungal protein B (92 aa).

The N-terminal stretch at 1 to 18 is a signal peptide; it reads MHITSIAIVFFAAMGAVA. The propeptide occupies 19–34; it reads SPIATESDDLDARDVQ. Intrachain disulfides connect C42/C70, C49/C77, and C62/C88.

This sequence belongs to the antifungal protein pafB family.

The protein resides in the secreted. It localises to the host cytoplasm. Functionally, antifungal protein that acts as an inhibitor of growth of human pathogenic molds and yeasts. The protein is Antifungal protein B of Penicillium rubens (strain ATCC 28089 / DSM 1075 / NRRL 1951 / Wisconsin 54-1255) (Penicillium chrysogenum).